The chain runs to 420 residues: MPVRVSEFSWQQTPAALFLSLPLRGVCVRDADVFCGESYLKVNFPPFLFEVFLYAPIDDGKSKAKIGNDTILFTLYKKEPVLWESLSMPGVDKEMMQRIREKSILQAQEKAKEATEAKAAAKREDQRYALGEMMKIEEEERKKIEDMKENERKKATRELEAWKECQKKADGQKRVQRKEKPLQGKQAEERGALKPQSLPRKAPPTRLPTRGRNWENIFSEKLKEDRVPAPRSAGSIQISFTPRVFPTALRESQVAEEEEWLHKQAEARRAMSTDLPEFSDLKEEEKNPDWLKDKGNKLFATENYLAAIDAYNLAIRLNRKIPVLYLNRAACHLKLKNLHKAIEDSSKALELLTPPVADNANARMKAHVRRGTAFCQLELYVEGLQDYEAALKIDPANTVVQNDAEKIRNIIQGTTLKSHD.

In terms of domain architecture, CS spans 3-87 (VRVSEFSWQQ…KEPVLWESLS (85 aa)). Residues 7–103 (EFSWQQTPAA…EMMQRIREKS (97 aa)) are mediates interaction with ESR1 and STUB1. A compositionally biased stretch (basic and acidic residues) spans 165–192 (CQKKADGQKRVQRKEKPLQGKQAEERGA). The tract at residues 165–212 (CQKKADGQKRVQRKEKPLQGKQAEERGALKPQSLPRKAPPTRLPTRGR) is disordered. 3 TPR repeats span residues 288–321 (PDWLKDKGNKLFATENYLAAIDAYNLAIRLNRKI), 323–355 (VLYLNRAACHLKLKNLHKAIEDSSKALELLTPP), and 364–397 (MKAHVRRGTAFCQLELYVEGLQDYEAALKIDPAN).

In terms of assembly, interacts with ZMYND10. Interacts with STUB1. Interacts with ESR1 and ESR2. Interacts with DNAAF2. Interacts with CCT3, CCT4, CCT5 and CCT8. Interacts with DNAAF6/PIH1D3.

The protein resides in the nucleus. It is found in the cytoplasm. It localises to the cell projection. The protein localises to the neuron projection. Its subcellular location is the dynein axonemal particle. In terms of biological role, involved in neuronal migration during development of the cerebral neocortex. May regulate the stability and proteasomal degradation of the estrogen receptors that play an important role in neuronal differentiation, survival and plasticity. Axonemal dynein assembly factor required for ciliary motility. This is Dynein axonemal assembly factor 4 from Rattus norvegicus (Rat).